The following is a 354-amino-acid chain: Ferredoxin--NADP reductase (354 aa).

Residues Asp39, Gln47, Tyr52, Val92, Phe127, Asp296, and Thr337 each coordinate FAD.

This sequence belongs to the ferredoxin--NADP reductase type 2 family. As to quaternary structure, homodimer. FAD serves as cofactor.

The catalysed reaction is 2 reduced [2Fe-2S]-[ferredoxin] + NADP(+) + H(+) = 2 oxidized [2Fe-2S]-[ferredoxin] + NADPH. This Albidiferax ferrireducens (strain ATCC BAA-621 / DSM 15236 / T118) (Rhodoferax ferrireducens) protein is Ferredoxin--NADP reductase.